Consider the following 947-residue polypeptide: Protein RRC1-like (947 aa).

A compositionally biased stretch (basic and acidic residues) spans 1 to 11 (MVKDEFFLDHP). 2 disordered regions span residues 1-35 (MVKD…RMKQ) and 63-167 (PNDN…DELP). Residues 12 to 34 (GRKHRSRNTEKKKKPRRRERRMK) show a composition bias toward basic residues. Basic and acidic residues-rich tracts occupy residues 66–84 (NKLK…DSIS) and 104–155 (KGPE…DHNS). The 82-residue stretch at 187-268 (TNLYVVNLSS…YELKIGWGKV (82 aa)) folds into the RRM domain. One copy of the SURP motif repeat lies at 336–379 (IIDTMALNVLDGGCAFEQAIMERGRGNPLFNFLFELGSKEHTYY). The tract at residues 412 to 434 (PPLPATRSPEHGKESRGTYAAGK) is disordered. The 146-residue stretch at 444–589 (LTDSQRDEFE…GLRATFLRSR (146 aa)) folds into the CID domain. One can recognise an SAP domain in the interval 638–672 (LMNRPISELERRCRHNGLSLLGGREMMVARLVCLK). Disordered regions lie at residues 752–797 (REDD…PENE) and 846–947 (GLSG…RGMR). Composition is skewed to basic and acidic residues over residues 854 to 876 (LPEK…RSES), 888 to 916 (LTRE…LDKD), and 924 to 947 (SSRE…RGMR).

Expressed in leaves, inflorescence stems, roots, flower buds, open flowers and siliques.

Probable SR-like splicing factor. The protein is Protein RRC1-like of Arabidopsis thaliana (Mouse-ear cress).